Reading from the N-terminus, the 1227-residue chain is Methionine synthase (1227 aa).

The Hcy-binding domain occupies 2–325 (SSKVEQLRAQ…EHIAAMSRAV (324 aa)). Residues Cys247, Cys310, and Cys311 each contribute to the Zn(2+) site. Positions 356–617 (FVNVGERTNV…LPAELRDAVE (262 aa)) constitute a Pterin-binding domain. Residues 650-744 (QQAEWRSWDV…FIEASKEKGS (95 aa)) form the B12-binding N-terminal domain. Methylcob(III)alamin-binding positions include Glu694, 756–760 (GDVHD), His759, Ser804, Thr808, and Ala860. In terms of domain architecture, B12-binding spans 746-881 (NGKMVIATVK…SDTQRDDFVA (136 aa)). One can recognise an AdoMet activation domain in the interval 897-1227 (KKPRTPPVTL…LAPNLGYDAD (331 aa)). Residues Asp946, Arg1134, and 1189–1190 (YF) each bind S-adenosyl-L-methionine.

The protein belongs to the vitamin-B12 dependent methionine synthase family. It depends on methylcob(III)alamin as a cofactor. The cofactor is Zn(2+).

It carries out the reaction (6S)-5-methyl-5,6,7,8-tetrahydrofolate + L-homocysteine = (6S)-5,6,7,8-tetrahydrofolate + L-methionine. Its pathway is amino-acid biosynthesis; L-methionine biosynthesis via de novo pathway; L-methionine from L-homocysteine (MetH route): step 1/1. In terms of biological role, catalyzes the transfer of a methyl group from methyl-cobalamin to homocysteine, yielding enzyme-bound cob(I)alamin and methionine. Subsequently, remethylates the cofactor using methyltetrahydrofolate. The sequence is that of Methionine synthase (metH) from Salmonella typhimurium (strain LT2 / SGSC1412 / ATCC 700720).